The following is a 417-amino-acid chain: Phosphoglycerate kinase 1 (417 aa).

Ser-2 is modified (N-acetylserine). Ser-2 and Ser-4 each carry phosphoserine. Lys-6 carries the N6-succinyllysine modification. Lys-11 is modified (N6-acetyllysine). (2R)-3-phosphoglycerate is bound by residues Val-23, Asp-24, Phe-25, Asn-26, Gln-38, and Arg-39. Positions 38–43 (QRIKAA) are mitochondrial targeting region exposed following cis-trans isomerization by PIN1 and recognized by the TOM complex for mitochondrial translocation of the protein. N6-acetyllysine; alternate is present on Lys-48. Lys-48 is subject to N6-succinyllysine; alternate. 4 residues coordinate (2R)-3-phosphoglycerate: Ser-62, His-63, Gly-65, and Arg-66. Residue Lys-75 is modified to N6-acetyllysine. Residue Tyr-76 is modified to Phosphotyrosine. N6-acetyllysine occurs at positions 86 and 91. N6-acetyllysine; alternate is present on Lys-97. Lys-97 carries the N6-(2-hydroxyisobutyryl)lysine; alternate modification. Positions 122 and 123 each coordinate (2R)-3-phosphoglycerate. Position 131 is an N6-acetyllysine; alternate (Lys-131). Lys-131 is subject to N6-malonyllysine; alternate. Lys-146 carries the N6-acetyllysine modification. The (2R)-3-phosphoglycerate site is built by His-170 and Arg-171. Lys-191 carries the N6-succinyllysine modification. The residue at position 196 (Tyr-196) is a Phosphotyrosine. N6-acetyllysine is present on Lys-199. Ser-203 is modified (phosphoserine). Gly-214 is a binding site for ADP. Gly-214 serves as a coordination point for CDP. Ala-215 and Lys-216 together coordinate AMP. An ATP-binding site is contributed by Ala-215. Mg(2+) is bound at residue Ala-215. Lys-216 carries the post-translational modification N6-(2-hydroxyisobutyryl)lysine. Mg(2+) is bound by residues Ala-218 and Asp-219. Asp-219 is a CDP binding site. Lys-220 lines the AMP pocket. Residue Lys-220 coordinates ATP. Lys-220 carries the post-translational modification N6-(2-hydroxyisobutyryl)lysine. ADP is bound at residue Gly-238. Gly-238 serves as a coordination point for CDP. Position 239 (Gly-239) interacts with AMP. Gly-239 is a binding site for ATP. Residues Lys-267 and Lys-291 each carry the N6-acetyllysine modification. Residue Gly-313 coordinates AMP. Residue Gly-313 participates in ATP binding. Position 323 is an N6-(2-hydroxyisobutyryl)lysine (Lys-323). 3 residues coordinate CDP: Gly-338, Val-340, and Phe-343. Phe-343 contacts ADP. Position 344 (Glu-344) interacts with AMP. Residue Glu-344 participates in ATP binding. Lys-361 is modified (N6-acetyllysine). Residues Asp-375 and Thr-376 each contribute to the ATP site. Asp-375 is a Mg(2+) binding site.

Belongs to the phosphoglycerate kinase family. In terms of assembly, monomer. Interacts with kinase MAPK1/ERK2; the interaction is direct, occurs under hypoxic conditions, and promotes its interaction with PIN1. Interacts with peptidyl-prolyl cis-trans isomerase PIN1; the interaction is direct, occurs under hypoxic conditions, and targets the protein to the mitochondrion by promoting interactions with the TOM complex. Interacts with mitochondrial circRNA mcPGK1 (via its 2nd stem-loop); the interaction is direct and targets the protein to the mitochondrion by promoting interactions with the TOM complex. Interacts with pyruvate dehydrogenase kinase PDK1; the interaction is direct, occurs under hypoxic conditions and leads to PDK1-mediated inhibition of pyruvate dehydrogenase complex activity. The cofactor is Mg(2+). In terms of processing, phosphorylated at Ser-203 by MAPK1/ERK2 under hypoxic conditions, which promotes its mitochondrial targeting.

It localises to the cytoplasm. The protein localises to the cytosol. The protein resides in the mitochondrion matrix. It carries out the reaction (2R)-3-phosphoglycerate + ATP = (2R)-3-phospho-glyceroyl phosphate + ADP. The enzyme catalyses L-seryl-[protein] + ATP = O-phospho-L-seryl-[protein] + ADP + H(+). Its pathway is carbohydrate degradation; glycolysis; pyruvate from D-glyceraldehyde 3-phosphate: step 2/5. Its function is as follows. Catalyzes one of the two ATP producing reactions in the glycolytic pathway via the reversible conversion of 1,3-diphosphoglycerate to 3-phosphoglycerate. Both L- and D- forms of purine and pyrimidine nucleotides can be used as substrates, but the activity is much lower on pyrimidines. In addition to its role as a glycolytic enzyme, it seems that PGK-1 acts as a polymerase alpha cofactor protein (primer recognition protein). Acts as a protein kinase when localized to the mitochondrion where it phosphorylates pyruvate dehydrogenase kinase PDK1 to inhibit pyruvate dehydrogenase complex activity and suppress the formation of acetyl-coenzyme A from pyruvate, and consequently inhibit oxidative phosphorylation and promote glycolysis. May play a role in sperm motility. This chain is Phosphoglycerate kinase 1 (PGK1), found in Sus scrofa (Pig).